The chain runs to 272 residues: MTTRVIALDLDGTLLTPKKTLLPSSIEALARAREAGYQLIIVTGRHHVAIHPFYQALALDTPAICCNGTYLYDYHAKTVLEADPMPVIKALQLIEMLNEHHIHGLMYVDDAMVYEHPTGHVIRTSNWAQTLPPEQRPTFTQVASLAETAQQVNAVWKFALTHDDLPQLQHFGKHVEHELGLECEWSWHDQVDIARGGNSKGKRLTKWVEAQGWSMENVVAFGDNFNDISMLEAAGTGVAMGNADDAVKARANIVIGDNTTDSIAQFIYSHLI.

The Nucleophile role is filled by Asp9. Asp9 contributes to the Mg(2+) binding site. Leu10 is a binding site for phosphate. Asp11 is a Mg(2+) binding site. Phosphate contacts are provided by residues 43 to 44 and Lys200; that span reads TG. Residue Asp223 participates in Mg(2+) binding. Asn226 serves as a coordination point for phosphate.

It belongs to the HAD-like hydrolase superfamily. CbbY/CbbZ/Gph/YieH family. It depends on Mg(2+) as a cofactor. Requires Mn(2+) as cofactor. Co(2+) serves as cofactor. The cofactor is Zn(2+).

It carries out the reaction pyridoxal 5'-phosphate + H2O = pyridoxal + phosphate. Its function is as follows. Catalyzes the dephosphorylation of pyridoxal-phosphate (PLP). Can also hydrolyze erythrose-4-phosphate (Ery4P) and fructose-1,6-bis-phosphate (Fru1,6bisP). The chain is Pyridoxal phosphate phosphatase YbhA (ybhA) from Escherichia coli (strain K12).